The sequence spans 160 residues: Type IV major fimbrial protein FimA (160 aa).

Positions 1-7 are cleaved as a propeptide — leader sequence; sequence MKSLQKG. Phe8 is modified (N-methylphenylalanine). A helical transmembrane segment spans residues 8 to 28; that stretch reads FTLIELMIVVAIIGILAAIAI.

Belongs to the N-Me-Phe pilin family. In terms of assembly, the pili are polar flexible filaments of about 5.4 nanometers diameter and 2.5 micrometers average length; they consist of only a single polypeptide chain arranged in a helical configuration of five subunits per turn in the assembled pilus.

The protein localises to the fimbrium. It is found in the membrane. In terms of biological role, major component of the type IV fimbriae that plays an essential role in twitching motility, natural transformation, and protease secretion. This Dichelobacter nodosus (Bacteroides nodosus) protein is Type IV major fimbrial protein FimA (fimA).